Consider the following 340-residue polypeptide: Glyceraldehyde-3-phosphate dehydrogenase (340 aa).

NAD(+)-binding positions include 11–12 and glycine 111; that span reads SI. A D-glyceraldehyde 3-phosphate-binding site is contributed by 140-142; that stretch reads SCN. Catalysis depends on cysteine 141, which acts as the Nucleophile. Position 169 (arginine 169) interacts with NAD(+). 195-196 lines the D-glyceraldehyde 3-phosphate pocket; it reads HG. Glutamine 303 is an NAD(+) binding site.

This sequence belongs to the glyceraldehyde-3-phosphate dehydrogenase family. In terms of assembly, homotetramer.

Its subcellular location is the cytoplasm. The catalysed reaction is D-glyceraldehyde 3-phosphate + phosphate + NADP(+) = (2R)-3-phospho-glyceroyl phosphate + NADPH + H(+). It catalyses the reaction D-glyceraldehyde 3-phosphate + phosphate + NAD(+) = (2R)-3-phospho-glyceroyl phosphate + NADH + H(+). Its pathway is carbohydrate degradation; glycolysis; pyruvate from D-glyceraldehyde 3-phosphate: step 1/5. The polypeptide is Glyceraldehyde-3-phosphate dehydrogenase (Methanococcus maripaludis (strain DSM 14266 / JCM 13030 / NBRC 101832 / S2 / LL)).